Consider the following 76-residue polypeptide: Bowman-Birk type proteinase inhibitor DE-3 (76 aa).

Disulfide bonds link Cys-16–Cys-70, Cys-17–Cys-32, Cys-20–Cys-66, Cys-22–Cys-30, Cys-40–Cys-47, Cys-44–Cys-59, and Cys-49–Cys-57.

Belongs to the Bowman-Birk serine protease inhibitor family.

This Macrotyloma axillare (Perennial horse gram) protein is Bowman-Birk type proteinase inhibitor DE-3.